Consider the following 465-residue polypeptide: Macrophage metalloelastase (465 aa).

The N-terminal stretch at 1–21 is a signal peptide; the sequence is MKFLLVLVLLVSLQVSACGAA. The propeptide at 22-101 is activation peptide; sequence PMNESEFAEW…DVQHLRAVPQ (80 aa). The Cysteine switch signature appears at 86–93; that stretch reads SRCGVPDV. Cys-88 contributes to the Zn(2+) binding site. 2 residues coordinate Ca(2+): Asp-120 and Asp-154. Residues His-164 and Asp-166 each coordinate Zn(2+). 4 residues coordinate Ca(2+): Asp-171, Gly-172, Gly-174, and Thr-176. His-179 is a binding site for Zn(2+). Residues Gly-186 and Asp-190 each contribute to the Ca(2+) site. His-192 contributes to the Zn(2+) binding site. Asp-194, Glu-195, and Glu-197 together coordinate Ca(2+). Residue His-214 participates in Zn(2+) binding. Residue Glu-215 is part of the active site. Zn(2+) contacts are provided by His-218 and His-224. The cysteines at positions 278 and 465 are disulfide-linked. Hemopexin repeat units lie at residues 281–324, 325–371, 373–421, and 422–465; these read SLSF…WPTI, PSGI…GFPA, VKKI…FPGI, and RPKI…WFGC. Residue Asp-285 participates in Ca(2+) binding. Asn-313 is a glycosylation site (N-linked (GlcNAc...) asparagine). Ca(2+)-binding residues include Asp-377 and Asp-426.

This sequence belongs to the peptidase M10A family. It depends on Ca(2+) as a cofactor. Zn(2+) serves as cofactor.

It is found in the secreted. Its subcellular location is the extracellular space. The protein localises to the extracellular matrix. The enzyme catalyses Hydrolysis of soluble and insoluble elastin. Specific cleavages are also produced at 14-Ala-|-Leu-15 and 16-Tyr-|-Leu-17 in the B chain of insulin.. Its function is as follows. May be involved in tissue injury and remodeling. Has significant elastolytic activity. Can accept large and small amino acids at the P1' site, but has a preference for leucine. Aromatic or hydrophobic residues are preferred at the P1 site, with small hydrophobic residues (preferably alanine) occupying P3. The sequence is that of Macrophage metalloelastase (Mmp12) from Rattus norvegicus (Rat).